A 258-amino-acid polypeptide reads, in one-letter code: Peptide methionine sulfoxide reductase A4, chloroplastic (258 aa).

A chloroplast-targeting transit peptide spans M1–P53. Position 54 is an N-acetylmethionine (M54). Residues G62–S89 are disordered. Position 245 is a phosphoserine (S245).

Belongs to the MsrA Met sulfoxide reductase family. In terms of tissue distribution, expressed in rosette and cauline leaves, and at lower levels in stems and flowers (at protein level).

It localises to the plastid. Its subcellular location is the chloroplast stroma. The catalysed reaction is L-methionyl-[protein] + [thioredoxin]-disulfide + H2O = L-methionyl-(S)-S-oxide-[protein] + [thioredoxin]-dithiol. The enzyme catalyses [thioredoxin]-disulfide + L-methionine + H2O = L-methionine (S)-S-oxide + [thioredoxin]-dithiol. In terms of biological role, catalyzes the reduction of methionine sulfoxide (MetSO) to methionine in proteins. Plays a protective role against oxidative stress by restoring activity to proteins that have been inactivated by methionine oxidation. Prevents the methionine sulfoxidation of the heat shock protein HSP21 and its subsequent inactivation. MSRA family specifically reduces the MetSO S-enantiomer. The polypeptide is Peptide methionine sulfoxide reductase A4, chloroplastic (MSR4) (Arabidopsis thaliana (Mouse-ear cress)).